A 159-amino-acid chain; its full sequence is Putative 4-hydroxy-4-methyl-2-oxoglutarate aldolase (159 aa).

Substrate is bound by residues 74-77 and Arg-96; that span reads GDNL. Position 97 (Asp-97) interacts with a divalent metal cation.

It belongs to the class II aldolase/RraA-like family. As to quaternary structure, homotrimer. A divalent metal cation is required as a cofactor.

It catalyses the reaction 4-hydroxy-4-methyl-2-oxoglutarate = 2 pyruvate. It carries out the reaction oxaloacetate + H(+) = pyruvate + CO2. Functionally, catalyzes the aldol cleavage of 4-hydroxy-4-methyl-2-oxoglutarate (HMG) into 2 molecules of pyruvate. Also contains a secondary oxaloacetate (OAA) decarboxylase activity due to the common pyruvate enolate transition state formed following C-C bond cleavage in the retro-aldol and decarboxylation reactions. The polypeptide is Putative 4-hydroxy-4-methyl-2-oxoglutarate aldolase (Bacillus cereus (strain ZK / E33L)).